Reading from the N-terminus, the 504-residue chain is Cytochrome P450 2D10 (504 aa).

Residue serine 382 is glycosylated (O-linked (GlcNAc) serine). Cysteine 446 is a binding site for heme.

This sequence belongs to the cytochrome P450 family. It depends on heme as a cofactor.

It localises to the endoplasmic reticulum membrane. The protein localises to the microsome membrane. The enzyme catalyses an organic molecule + reduced [NADPH--hemoprotein reductase] + O2 = an alcohol + oxidized [NADPH--hemoprotein reductase] + H2O + H(+). Its function is as follows. Cytochromes P450 are a group of heme-thiolate monooxygenases. In liver microsomes, this enzyme is involved in an NADPH-dependent electron transport pathway. It oxidizes a variety of structurally unrelated compounds, including steroids, fatty acids, and xenobiotics. This chain is Cytochrome P450 2D10 (Cyp2d10), found in Rattus norvegicus (Rat).